The primary structure comprises 506 residues: Adenylosuccinate synthetase (506 aa).

GTP contacts are provided by residues 35–41 (GDEGKGK) and 63–65 (GHT). Aspartate 36 (proton acceptor) is an active-site residue. Mg(2+)-binding residues include aspartate 36 and glycine 63. IMP-binding positions include 36–39 (DEGK), 61–64 (NAGH), threonine 212, arginine 226, asparagine 304, threonine 319, and arginine 383. The Proton donor role is filled by histidine 64. 379–385 (VTTKRKR) contacts substrate. Residues arginine 385, 411–413 (KLD), and 494–496 (GVG) each bind GTP.

Belongs to the adenylosuccinate synthetase family. In terms of assembly, homodimer. Mg(2+) serves as cofactor.

It is found in the cytoplasm. The enzyme catalyses IMP + L-aspartate + GTP = N(6)-(1,2-dicarboxyethyl)-AMP + GDP + phosphate + 2 H(+). It functions in the pathway purine metabolism; AMP biosynthesis via de novo pathway; AMP from IMP: step 1/2. In terms of biological role, plays an important role in the de novo pathway and in the salvage pathway of purine nucleotide biosynthesis. Catalyzes the first committed step in the biosynthesis of AMP from IMP. The polypeptide is Adenylosuccinate synthetase (Drosophila yakuba (Fruit fly)).